A 311-amino-acid chain; its full sequence is Putative dihydroorotate dehydrogenase A (fumarate) (311 aa).

Substrate is bound by residues K45, 69-73 (NSMGL), and N128. 45-46 (KT) contributes to the FMN binding site. An FMN-binding site is contributed by N128. C131 acts as the Nucleophile in catalysis. Positions 165 and 193 each coordinate FMN. A substrate-binding site is contributed by 194 to 195 (NS). FMN-binding positions include G220, 248-249 (GG), and 270-271 (GT).

It belongs to the dihydroorotate dehydrogenase family. Type 1 subfamily. In terms of assembly, homodimer. FMN is required as a cofactor.

The protein localises to the cytoplasm. The catalysed reaction is (S)-dihydroorotate + fumarate = orotate + succinate. The protein operates within pyrimidine metabolism; UMP biosynthesis via de novo pathway. In terms of biological role, catalyzes the conversion of dihydroorotate to orotate with fumarate as the electron acceptor. The polypeptide is Putative dihydroorotate dehydrogenase A (fumarate) (pyrD) (Streptococcus equi subsp. equi (strain 4047)).